The sequence spans 216 residues: Transmembrane emp24 domain-containing protein eca (216 aa).

The signal sequence occupies residues 1–20; that stretch reads MRDQFISLALILCVLHSACG. The Lumenal portion of the chain corresponds to 21 to 182; sequence LYFHISETER…FRHTSESTNS (162 aa). A GOLD domain is found at 30–126; the sequence is RKCFIEEVPD…QLRVHLDIQV (97 aa). The stretch at 134 to 164 forms a coiled coil; it reads AHVAQKEKLTELQLRIRQLLDQVEQITKEQN. A helical transmembrane segment spans residues 183–203; it reads RVLWWSLAQTVVLVCMGFWQM. Residues 204-216 lie on the Cytoplasmic side of the membrane; the sequence is RHLKSFFEAKKLV. The short motif at 213-216 is the Prevents secretion from ER element; it reads KKLV.

This sequence belongs to the EMP24/GP25L family.

It localises to the endoplasmic reticulum membrane. In terms of biological role, eca and bai are essential, though not redundant, for dorsoventral patterning of the embryo. Specifically required during early embryogenesis for the activity of maternal tkv, while the zygotic tkv is not affected. Involved in Golgi organization. This chain is Transmembrane emp24 domain-containing protein eca, found in Drosophila melanogaster (Fruit fly).